The following is a 628-amino-acid chain: CMP-5'-(3-aminopropyl)phosphonate synthase (628 aa).

The tract at residues 1 to 255 (MNENRTFATP…DPGDQRQADF (255 aa)) is mobA-like NTP transferase. A decarboxylase region spans residues 278–628 (GVTDHALLYN…TTEGAGRADG (351 aa)). At lysine 466 the chain carries N6-(pyridoxal phosphate)lysine.

This sequence in the N-terminal section; belongs to the MobA family. The protein in the C-terminal section; belongs to the class-I pyridoxal-phosphate-dependent aminotransferase family. Mg(2+) is required as a cofactor. It depends on pyridoxal 5'-phosphate as a cofactor.

The enzyme catalyses 2-amino-4-phosphonobutanoate + CTP = CMP-5'-(3-amino-3-carboxypropyl)phosphonate + diphosphate. The catalysed reaction is CMP-5'-(3-amino-3-carboxypropyl)phosphonate + H(+) = CMP-5'-(3-aminopropyl)phosphonate + CO2. It functions in the pathway antibiotic biosynthesis. Bifunctional cytidylyltransferase/decarboxylase involved in the biosynthesis of the phosphonate antibiotic FR-900098, a potent antimalarial agent that acts as an inhibitor of 1-deoxy-D-xylulose 5-phosphate reductoisomerase (DXR), the first enzyme in the nonmevalonate pathway for isoprenoid biosynthesis. Catalyzes the condensation of 2-amino-4-phosphonobutyrate (2APn) and CTP to form CMP-5'-2APn and then decarboxylates CMP-5'-2APn to yield CMP-5'-(3-aminopropyl)phosphonate (CMP-5'-3APn). This is CMP-5'-(3-aminopropyl)phosphonate synthase from Streptomyces rubellomurinus (strain ATCC 31215).